Reading from the N-terminus, the 375-residue chain is Squamosa promoter-binding-like protein 9 (375 aa).

Disordered stretches follow at residues 1–30 (MEMG…SFSG) and 43–73 (GGGG…QIPR). Low complexity predominate over residues 18–30 (SGGSSTESSSFSG). The segment at 71 to 148 (IPRCQVEGCG…AGHNERRRKP (78 aa)) adopts an SBP-type zinc-finger fold. Zn(2+) is bound by residues Cys-74, Cys-79, Cys-96, His-99, Cys-115, Cys-118, His-122, and Cys-134. The Bipartite nuclear localization signal signature appears at 131–147 (KRSCRRRLAGHNERRRK). Disordered regions lie at residues 252 to 278 (LLSN…NTWR) and 345 to 375 (SDHH…NWSL). The segment covering 262-275 (NNNNNNNNNNNNNN) has biased composition (low complexity). A compositionally biased stretch (basic and acidic residues) spans 345–362 (SDHHHQSRRQYMEDENTR). Residues 363-375 (AYDSSSHHTNWSL) are compositionally biased toward polar residues.

Requires Zn(2+) as cofactor.

The protein localises to the nucleus. Its subcellular location is the cytoplasm. Trans-acting factor that binds specifically to the consensus nucleotide sequence 5'-TNCGTACAA-3'. This is Squamosa promoter-binding-like protein 9 (SPL9) from Arabidopsis thaliana (Mouse-ear cress).